The chain runs to 290 residues: Beta-lactamase OXY-2 (290 aa).

A signal peptide spans Met-1–Ala-27. The Acyl-ester intermediate role is filled by Ser-72. Lys-236–Gly-238 contacts substrate.

This sequence belongs to the class-A beta-lactamase family.

The enzyme catalyses a beta-lactam + H2O = a substituted beta-amino acid. In terms of biological role, hydrolyzes broad-spectrum beta-lactam antibiotics. Active against all third-generation cephalosporins but ceftazidime. This chain is Beta-lactamase OXY-2 (bla), found in Klebsiella oxytoca.